Here is a 279-residue protein sequence, read N- to C-terminus: MPARKRFGQHWLRSEAILDRIVAAAELRPSDRVLEIGPGRGALTQRLLAAVDGLVAVELDRDLIGQLQQRFGQAENFCLLEGDILQLDWTAAIADRPRFANPSKVVANIPYNITGPILQSLLGTIAQPRRPAFERLVLLVQQEVADRLCATPGQRAYGALSVRVQYLASCERVCAVPPKSFSPPPKVQSTVICLKPRPWPQVCNNPGRLEKLLNQGFSAKRKMLRNNLKSLYSSEQIEAAFAAHQIAPEARAETLSIDQWIGLCTDLGDPTDSAINPTA.

Positions 10, 12, 37, 58, 83, and 108 each coordinate S-adenosyl-L-methionine.

Belongs to the class I-like SAM-binding methyltransferase superfamily. rRNA adenine N(6)-methyltransferase family. RsmA subfamily.

It is found in the cytoplasm. It catalyses the reaction adenosine(1518)/adenosine(1519) in 16S rRNA + 4 S-adenosyl-L-methionine = N(6)-dimethyladenosine(1518)/N(6)-dimethyladenosine(1519) in 16S rRNA + 4 S-adenosyl-L-homocysteine + 4 H(+). Its function is as follows. Specifically dimethylates two adjacent adenosines (A1518 and A1519) in the loop of a conserved hairpin near the 3'-end of 16S rRNA in the 30S particle. May play a critical role in biogenesis of 30S subunits. This chain is Ribosomal RNA small subunit methyltransferase A, found in Synechococcus elongatus (strain ATCC 33912 / PCC 7942 / FACHB-805) (Anacystis nidulans R2).